A 366-amino-acid chain; its full sequence is Spermidine/putrescine import ATP-binding protein PotA (366 aa).

One can recognise an ABC transporter domain in the interval 8-239 (IRFENVTKQF…PINKFVADFI (232 aa)). Residue 41–48 (GPSGCGKT) participates in ATP binding.

The protein belongs to the ABC transporter superfamily. Spermidine/putrescine importer (TC 3.A.1.11.1) family. The complex is composed of two ATP-binding proteins (PotA), two transmembrane proteins (PotB and PotC) and a solute-binding protein (PotD).

It is found in the cell membrane. It carries out the reaction ATP + H2O + polyamine-[polyamine-binding protein]Side 1 = ADP + phosphate + polyamineSide 2 + [polyamine-binding protein]Side 1.. Its function is as follows. Part of the ABC transporter complex PotABCD involved in spermidine/putrescine import. Responsible for energy coupling to the transport system. In Listeria monocytogenes serovar 1/2a (strain ATCC BAA-679 / EGD-e), this protein is Spermidine/putrescine import ATP-binding protein PotA.